The following is a 554-amino-acid chain: CTP synthase (554 aa).

The interval 1-265 is amidoligase domain; that stretch reads MTPLIFVTGG…DELVIDQFKL (265 aa). Serine 13 is a binding site for CTP. Position 13 (serine 13) interacts with UTP. ATP contacts are provided by residues 14–19 and aspartate 71; that span reads SLGKGI. Residues aspartate 71 and glutamate 139 each coordinate Mg(2+). CTP-binding positions include 146-148, 186-191, and lysine 222; these read DIE and KTKPTQ. UTP-binding positions include 186–191 and lysine 222; that span reads KTKPTQ. One can recognise a Glutamine amidotransferase type-1 domain in the interval 292-545; the sequence is TIAVVGKYVD…VRAAREKKAG (254 aa). Glycine 353 contributes to the L-glutamine binding site. Catalysis depends on cysteine 380, which acts as the Nucleophile; for glutamine hydrolysis. L-glutamine contacts are provided by residues 381–384, glutamate 404, and arginine 471; that span reads YGMQ. Catalysis depends on residues histidine 518 and glutamate 520.

Belongs to the CTP synthase family. Homotetramer.

It carries out the reaction UTP + L-glutamine + ATP + H2O = CTP + L-glutamate + ADP + phosphate + 2 H(+). The enzyme catalyses L-glutamine + H2O = L-glutamate + NH4(+). It catalyses the reaction UTP + NH4(+) + ATP = CTP + ADP + phosphate + 2 H(+). The protein operates within pyrimidine metabolism; CTP biosynthesis via de novo pathway; CTP from UDP: step 2/2. Its activity is regulated as follows. Allosterically activated by GTP, when glutamine is the substrate; GTP has no effect on the reaction when ammonia is the substrate. The allosteric effector GTP functions by stabilizing the protein conformation that binds the tetrahedral intermediate(s) formed during glutamine hydrolysis. Inhibited by the product CTP, via allosteric rather than competitive inhibition. Catalyzes the ATP-dependent amination of UTP to CTP with either L-glutamine or ammonia as the source of nitrogen. Regulates intracellular CTP levels through interactions with the four ribonucleotide triphosphates. The sequence is that of CTP synthase from Xanthomonas campestris pv. campestris (strain 8004).